The following is a 247-amino-acid chain: 5'-nucleotidase SurE (247 aa).

4 residues coordinate a divalent metal cation: aspartate 8, aspartate 9, serine 39, and asparagine 91.

This sequence belongs to the SurE nucleotidase family. It depends on a divalent metal cation as a cofactor.

The protein localises to the cytoplasm. It catalyses the reaction a ribonucleoside 5'-phosphate + H2O = a ribonucleoside + phosphate. Its function is as follows. Nucleotidase that shows phosphatase activity on nucleoside 5'-monophosphates. In Nitrosomonas eutropha (strain DSM 101675 / C91 / Nm57), this protein is 5'-nucleotidase SurE.